Reading from the N-terminus, the 174-residue chain is UPF0316 protein lmo1776 (174 aa).

Helical transmembrane passes span 4–24, 36–56, and 62–82; these read GIFI…IYTV, LAAL…SLVL, and IANV…GMKI.

Belongs to the UPF0316 family.

It localises to the cell membrane. The polypeptide is UPF0316 protein lmo1776 (Listeria monocytogenes serovar 1/2a (strain ATCC BAA-679 / EGD-e)).